The sequence spans 81 residues: Serine protease inhibitor Kazal-type 2 (81 aa).

The N-terminal stretch at 1-21 (MALAVLRLALLLLAVTFAGPL) is a signal peptide. Residues 27 to 81 (KYKTPFCARYQLPGCPRDFNPVCGTDMITYPNECTLCMKIRESGQNIKILRRGPC) form the Kazal-like domain. Cystine bridges form between C33–C63, C41–C60, and C49–C81.

In terms of tissue distribution, more abundant in epididymis than in testis.

Its subcellular location is the secreted. It localises to the cytoplasmic vesicle. The protein resides in the secretory vesicle. The protein localises to the acrosome. Its function is as follows. Strong inhibitor of acrosin in male and/or female genital tract. Also inhibits trypsin. In terms of biological role, as a strong inhibitor of acrosin, it is required for normal spermiogenesis. It probably hinders premature activation of proacrosin and other proteases, thus preventing the cascade of events leading to spermiogenesis defects. May be involved in the regulation of serine protease-dependent germ cell apoptosis. It also inhibits trypsin. This is Serine protease inhibitor Kazal-type 2 (SPINK2) from Macaca fascicularis (Crab-eating macaque).